Consider the following 498-residue polypeptide: uncharacterized protein (498 aa).

11 helical membrane passes run L54–L74, V100–V120, M128–S148, G150–L170, S188–L208, W221–L241, V302–L322, Y326–S346, A353–S373, T381–L401, and A446–L466.

Belongs to the major facilitator superfamily. Allantoate permease family.

It is found in the membrane. This is an uncharacterized protein from Schizosaccharomyces pombe (strain 972 / ATCC 24843) (Fission yeast).